A 391-amino-acid polypeptide reads, in one-letter code: DNA/RNA-binding protein KIN17 (391 aa).

Residues 28–50 (CQMCQKQCRDENGFKCHCMSESH) form a C2H2-type zinc finger. A winged helix-turn-helix (wHTH) region spans residues 51 to 160 (QRQLLLASEN…RQLELEKKKK (110 aa)). Lys-135 is modified (N6,N6,N6-trimethyllysine; by METTL22; alternate). The residue at position 135 (Lys-135) is an N6-methyllysine; alternate. 2 coiled-coil regions span residues 147-180 (ETIR…VRRG) and 252-275 (AKKK…TART). A disordered region spans residues 206–258 (NLNKGAGGSAGATTSKSSSLGPSALKLLGSAASGKRKESSQSSAQPAKKKKSA). Residues 282–332 (GIVVKIITKKLGEKYHKKKGVVKEVIDRYTAVVKMTDSGDRLKLDQTHLET) form a C-terminal subdomain A region. The C-terminal subdomain B stretch occupies residues 338-389 (GKRVLVLNGGYRGNEGTLESINEKAFSATIVIETGPLKGRRVEGIQYEDISK).

The protein belongs to the KIN17 family. In terms of assembly, associated with DNA polymerase alpha, RFC1 and cyclin A, in multiprotein DNA replication complexes. Also associates with replication origins at the G1/S phase boundary and throughout the S phase in vivo. In terms of tissue distribution, highly expressed in transformed mouse AtT20 neuroendocrine cells. Expressed at a lower level in testis, kidney, skeletal muscle, liver, lung, spleen, brain and heart and kidney. In testis, expressed at much higher levels in proliferating cells than in differentiating cells. Not detected in embryo.

The protein resides in the nucleus. It is found in the cytoplasm. Involved in DNA replication and the cellular response to DNA damage. May participate in DNA replication factories and create a bridge between DNA replication and repair mediated by high molecular weight complexes. May play a role in illegitimate recombination and regulation of gene expression. May participate in mRNA processing. Binds, in vitro, to double-stranded DNA. Also shown to bind preferentially to curved DNA in vitro and in vivo. Binds via its C-terminal domain to RNA in vitro. The sequence is that of DNA/RNA-binding protein KIN17 from Mus musculus (Mouse).